Consider the following 1066-residue polypeptide: Ribosomal protein S6 kinase delta-1 (1066 aa).

The region spanning 8 to 132 (SADLARFYTV…DFFKGGIIND (125 aa)) is the PX domain. A disordered region spans residues 207-228 (VASDSEQSKTEEERESRSLFPG). Residues 212 to 223 (EQSKTEEERESR) are compositionally biased toward basic and acidic residues. Residues 277–305 (VQGESSPTRREAVKRRTAEYLMRAESISS) form the MIT domain. Phosphoserine occurs at positions 282, 423, 427, 449, and 455. The Protein kinase 1 domain occupies 344 to 445 (GVIDKVLLVM…PTLAKVHLQQ (102 aa)). A disordered region spans residues 441-509 (VHLQQPTSSP…SGSSSEEECT (69 aa)). Low complexity predominate over residues 448 to 458 (SSPQDSSSFES). A compositionally biased stretch (polar residues) spans 474-483 (SSLTPSSQDD). Low complexity predominate over residues 492–503 (DSSPKWPDSGSS). Phosphoserine is present on residues Ser-494, Ser-528, Ser-583, Ser-605, Ser-608, Ser-640, Ser-661, Ser-664, Ser-667, and Ser-794. A disordered region spans residues 553–596 (HLAADSDSPSTQLRAHELKFFPNDDPEAVSSPRTSDSLSRSKNS). Positions 582–593 (SSPRTSDSLSRS) are enriched in low complexity. The 263-residue stretch at 794-1056 (SSDPKFQGLG…VEDIKSHPFF (263 aa)) folds into the Protein kinase 2 domain. ATP is bound by residues 801–809 (GLGVVESAV) and Arg-820. A Phosphoserine modification is found at Ser-872. Asp-929 serves as the catalytic Proton acceptor.

This sequence belongs to the protein kinase superfamily. Ser/Thr protein kinase family. S6 kinase subfamily. In terms of assembly, interacts with SPHK1 and phosphatidylinositol 3-phosphate. Interacts (via PX domain) with PRDX3. In terms of tissue distribution, highly expressed in testis, skeletal muscle, brain, heart, placenta, kidney and liver and weakly expressed in thymus, small intestine, lung and colon.

It localises to the cytoplasm. Its subcellular location is the membrane. The protein localises to the early endosome. It carries out the reaction L-seryl-[protein] + ATP = O-phospho-L-seryl-[protein] + ADP + H(+). The catalysed reaction is L-threonyl-[protein] + ATP = O-phospho-L-threonyl-[protein] + ADP + H(+). Its function is as follows. May be involved in transmitting sphingosine-1 phosphate (SPP)-mediated signaling into the cell. Plays a role in the recruitment of PRDX3 to early endosomes. In Homo sapiens (Human), this protein is Ribosomal protein S6 kinase delta-1 (RPS6KC1).